Reading from the N-terminus, the 482-residue chain is MSKKLHIKTWGCQMNEYDSQKMAELLDATNGYQLTDDATDADVILLNTCSIREKAQEKVFHQLGRWKLLKDDKPDLIIGVGGCVASQEGDSIRQRAPFVDVIFGPQTLHRLPEMIKQVQGDKGSSVVDISFPEIEKFDRLPEPKADGPSAFVSIMEGCSKYCTFCVVPYTRGEEVSRPVDDVLLEIAQLAEQSVREVNLLGQNVNAYRGDTHDGEICYFSDLIRLIAAIDGIDRIRYTTSHPVEFTQDIVDVYADVPELVDHLHLPVQSGSDRILNLMKRGHTAIEYKSTIRKLRKIRPNLSMSSDFIIGFPGETQDDFEATMKLISDVGFDMSFSFIYSARPGTPAADLPDDVTEQEKKERLYLLQNRITQMAQQISRQMFDTEQRILVEGPSKKNPMELRGRTENNRVVNFVGPHTVIGQFVDVRITEALPNSLRGDLIRTESEMNLRREIAPSAILTKAASLEPKPDTINEIGVATFVP.

The MTTase N-terminal domain maps to 3–120 (KKLHIKTWGC…LPEMIKQVQG (118 aa)). The [4Fe-4S] cluster site is built by cysteine 12, cysteine 49, cysteine 83, cysteine 158, cysteine 162, and cysteine 165. The Radical SAM core domain maps to 144–376 (KADGPSAFVS…QNRITQMAQQ (233 aa)). In terms of domain architecture, TRAM spans 379-442 (RQMFDTEQRI…PNSLRGDLIR (64 aa)).

The protein belongs to the methylthiotransferase family. MiaB subfamily. Monomer. Requires [4Fe-4S] cluster as cofactor.

It localises to the cytoplasm. The catalysed reaction is N(6)-dimethylallyladenosine(37) in tRNA + (sulfur carrier)-SH + AH2 + 2 S-adenosyl-L-methionine = 2-methylsulfanyl-N(6)-dimethylallyladenosine(37) in tRNA + (sulfur carrier)-H + 5'-deoxyadenosine + L-methionine + A + S-adenosyl-L-homocysteine + 2 H(+). Catalyzes the methylthiolation of N6-(dimethylallyl)adenosine (i(6)A), leading to the formation of 2-methylthio-N6-(dimethylallyl)adenosine (ms(2)i(6)A) at position 37 in tRNAs that read codons beginning with uridine. The polypeptide is tRNA-2-methylthio-N(6)-dimethylallyladenosine synthase (Pseudoalteromonas translucida (strain TAC 125)).